The following is a 135-amino-acid chain: Small ribosomal subunit protein uS12 (135 aa).

D89 is modified (3-methylthioaspartic acid). Residues 106-135 (GVANRRQSRSKYGAKRPKAGAAQATKGGKK) form a disordered region. Basic residues predominate over residues 111-123 (RQSRSKYGAKRPK). The segment covering 124 to 135 (AGAAQATKGGKK) has biased composition (low complexity).

Belongs to the universal ribosomal protein uS12 family. Part of the 30S ribosomal subunit. Contacts proteins S8 and S17. May interact with IF1 in the 30S initiation complex.

Its function is as follows. With S4 and S5 plays an important role in translational accuracy. Functionally, interacts with and stabilizes bases of the 16S rRNA that are involved in tRNA selection in the A site and with the mRNA backbone. Located at the interface of the 30S and 50S subunits, it traverses the body of the 30S subunit contacting proteins on the other side and probably holding the rRNA structure together. The combined cluster of proteins S8, S12 and S17 appears to hold together the shoulder and platform of the 30S subunit. The sequence is that of Small ribosomal subunit protein uS12 from Hydrogenobaculum sp. (strain Y04AAS1).